Reading from the N-terminus, the 115-residue chain is MASRRSCADVEELEKELQKLKIENKALKKKLVQHTSPEDELLTPAQKDAIINSTVNKLTKKAEEKIRERVLKDVLPLVSKNQCMEAIAHIKYRIDVSIDETYNLSRRPASKPRTK.

Belongs to the herpesviridae BLRF2 family.

This is an uncharacterized protein from Saimiriine herpesvirus 2 (strain 11) (SaHV-2).